The chain runs to 442 residues: Myb family transcription factor PHL13 (442 aa).

The HTH myb-type domain occupies 235-295 (MTSKQRMRWT…HLQKYRTARY (61 aa)). A DNA-binding region (H-T-H motif) is located at residues 266–291 (PKAVLKLINSPGLTVYHVKSHLQKYR). Residues 329-349 (TEALRLQMKVQKQLHEQLEIQ) form a coiled coil region. Residues 342 to 347 (LHEQLE) carry the LHEQLE motif. A compositionally biased stretch (basic and acidic residues) spans 370–380 (QQKMQENKKDS). The segment at 370 to 442 (QQKMQENKKD…TSNRKRVRED (73 aa)) is disordered. The span at 395–434 (SPNLSQPFLHKATNSEPSITQKLQNGSSTMDQSESTSGTS) shows a compositional bias: polar residues.

Belongs to the MYB-CC family.

It is found in the nucleus. In Arabidopsis thaliana (Mouse-ear cress), this protein is Myb family transcription factor PHL13.